The primary structure comprises 350 residues: Protein RecA (350 aa).

67-74 (GPESSGKT) contributes to the ATP binding site.

The protein belongs to the RecA family.

It localises to the cytoplasm. Functionally, can catalyze the hydrolysis of ATP in the presence of single-stranded DNA, the ATP-dependent uptake of single-stranded DNA by duplex DNA, and the ATP-dependent hybridization of homologous single-stranded DNAs. It interacts with LexA causing its activation and leading to its autocatalytic cleavage. The chain is Protein RecA from Chlamydia caviae (strain ATCC VR-813 / DSM 19441 / 03DC25 / GPIC) (Chlamydophila caviae).